We begin with the raw amino-acid sequence, 852 residues long: DNA mismatch repair protein MutS (852 aa).

602–609 (GPNMSGKS) serves as a coordination point for ATP.

It belongs to the DNA mismatch repair MutS family.

Its function is as follows. This protein is involved in the repair of mismatches in DNA. It is possible that it carries out the mismatch recognition step. This protein has a weak ATPase activity. The sequence is that of DNA mismatch repair protein MutS from Streptococcus thermophilus (strain CNRZ 1066).